The sequence spans 356 residues: C-C chemokine receptor 1-like protein 1 (356 aa).

The Extracellular segment spans residues 1 to 32 (MEIPAVTEPSYNTVAKNDFMSGFLCFSINVRA). A helical membrane pass occupies residues 33-60 (FGITVLTPLYSLVFIIGVIGHVLVVLVL). Over 61 to 67 (IQHKRLR) the chain is Cytoplasmic. The helical transmembrane segment at 68–92 (NMTSIYLFNLAISDLVFLSTLPFWV) threads the bilayer. The Extracellular portion of the chain corresponds to 93-108 (DYIMKGDWIFGNAMCK). C107 and C184 form a disulfide bridge. Residues 109–130 (FVSGFYYLGLYSDMFFITLLTI) traverse the membrane as a helical segment. At 131 to 147 (DRYLAVVHVVFALRART) the chain is on the cytoplasmic side. Residues 148 to 172 (VTFGIISSIITWVLAALVSIPCLYV) traverse the membrane as a helical segment. The Extracellular segment spans residues 173–198 (FKSQMEFTYHTCRAILPRKSLIRFLR). A helical transmembrane segment spans residues 199–224 (FQALTMNILGLILPLLAMIICYTRII). Residues 225 to 240 (NVLHRRPNKKKAKVMR) are Cytoplasmic-facing. Residues 241–265 (LIFVITLLFFLLLAPYYLAAFVSAF) traverse the membrane as a helical segment. The Extracellular portion of the chain corresponds to 266–282 (EDVLFTPSCLRSQQVDL). The chain crosses the membrane as a helical span at residues 283 to 306 (SLMITEALAYTHCCVNPVIYVFVG). Residues 307–356 (KRFRKYLWQLFRRHTAITLPQWLPFLSVDRAQRASATPPSTVEIETSADL) lie on the Cytoplasmic side of the membrane.

It belongs to the G-protein coupled receptor 1 family. In terms of tissue distribution, detected in the spleen, liver and leukocytes.

It is found in the cell membrane. Probable receptor for a C-C type chemokine. The polypeptide is C-C chemokine receptor 1-like protein 1 (Ccr1l1) (Mus musculus (Mouse)).